The primary structure comprises 501 residues: ATP synthase subunit alpha (501 aa).

169-176 (GDRQTGKT) is a binding site for ATP.

The protein belongs to the ATPase alpha/beta chains family. In terms of assembly, F-type ATPases have 2 components, CF(1) - the catalytic core - and CF(0) - the membrane proton channel. CF(1) has five subunits: alpha(3), beta(3), gamma(1), delta(1), epsilon(1). CF(0) has three main subunits: a(1), b(2) and c(9-12). The alpha and beta chains form an alternating ring which encloses part of the gamma chain. CF(1) is attached to CF(0) by a central stalk formed by the gamma and epsilon chains, while a peripheral stalk is formed by the delta and b chains.

It localises to the cell membrane. The enzyme catalyses ATP + H2O + 4 H(+)(in) = ADP + phosphate + 5 H(+)(out). Functionally, produces ATP from ADP in the presence of a proton gradient across the membrane. The alpha chain is a regulatory subunit. The protein is ATP synthase subunit alpha of Streptococcus pneumoniae serotype 2 (strain D39 / NCTC 7466).